The sequence spans 208 residues: Thymidylate kinase (208 aa).

Residue 12 to 19 (GVDGAGKS) participates in ATP binding.

It belongs to the thymidylate kinase family.

It catalyses the reaction dTMP + ATP = dTDP + ADP. Phosphorylation of dTMP to form dTDP in both de novo and salvage pathways of dTTP synthesis. This Bordetella bronchiseptica (strain ATCC BAA-588 / NCTC 13252 / RB50) (Alcaligenes bronchisepticus) protein is Thymidylate kinase.